Consider the following 147-residue polypeptide: Large ribosomal subunit protein uL11 (147 aa).

The protein belongs to the universal ribosomal protein uL11 family. In terms of assembly, part of the ribosomal stalk of the 50S ribosomal subunit. Interacts with L10 and the large rRNA to form the base of the stalk. L10 forms an elongated spine to which L12 dimers bind in a sequential fashion forming a multimeric L10(L12)X complex. In terms of processing, one or more lysine residues are methylated.

Its function is as follows. Forms part of the ribosomal stalk which helps the ribosome interact with GTP-bound translation factors. In Bacteroides thetaiotaomicron (strain ATCC 29148 / DSM 2079 / JCM 5827 / CCUG 10774 / NCTC 10582 / VPI-5482 / E50), this protein is Large ribosomal subunit protein uL11.